The sequence spans 1984 residues: Sodium channel protein type 9 subunit alpha (1984 aa).

Over 1 to 125 (MAMLPPPGPQ…RRISIKILVH (125 aa)) the chain is Cytoplasmic. Basic and acidic residues predominate over residues 26-39 (RISEEKAKEHKDEK). The disordered stretch occupies residues 26-55 (RISEEKAKEHKDEKKDDEEEGPKPSSDLEA). An I repeat occupies 112 to 410 (FSPLRRISIK…VAMAYEEQNQ (299 aa)). The helical transmembrane segment at 126–145 (SLFSMLIMCTILTNCIFMTL) threads the bilayer. At 146–150 (SNPPE) the chain is on the extracellular side. Residues 151-172 (WTKNVEYTFTGIYTFESLIKIL) traverse the membrane as a helical segment. Residues 173–185 (ARGFCVGEFTFLR) lie on the Cytoplasmic side of the membrane. The chain crosses the membrane as a helical span at residues 186 to 204 (DPWNWLDFVVIVFAYLTEF). At 205-210 (VNLGNV) the chain is on the extracellular side. N209 is a glycosylation site (N-linked (GlcNAc...) asparagine). Residues 211–227 (SALRTFRVLRALKTISV) form a helical membrane-spanning segment. Residues 228–241 (IPGLKTIVGALIQS) are Cytoplasmic-facing. The chain crosses the membrane as a helical span at residues 242-267 (VKKLSDVMILTVFCLSVFALIGLQLF). Residues 268-346 (MGNLKHKCFR…PDYGYTSFDT (79 aa)) lie on the Extracellular side of the membrane. C275 and C324 are joined by a disulfide. N283 carries an N-linked (GlcNAc...) asparagine glycan. Residues 347–363 (FSWAFLALFRLMTQDYW) constitute an intramembrane region (pore-forming). Topologically, residues 364-376 (ENLYQQTLRAAGK) are extracellular. Residues 377–402 (TYMIFFVVVIFLGSFYLINLILAVVA) traverse the membrane as a helical segment. Topologically, residues 403–744 (MAYEEQNQAN…LIYFIVMDPF (342 aa)) are cytoplasmic. Residues 461 to 471 (SSSETSRLSSK) show a composition bias toward low complexity. Disordered regions lie at residues 461-542 (SSSE…RGSL) and 576-609 (IFGD…RSPP). Basic residues predominate over residues 474–486 (KERRNRRKKKKQK). The span at 489–509 (SGEEKGDDEKLSKSGSEESIR) shows a compositional bias: basic and acidic residues. Residues 725 to 988 (CSPYWIKFKK…EEDTDANNLQ (264 aa)) form an II repeat. The helical transmembrane segment at 745–761 (VDLAITICIVLNTLFMA) threads the bilayer. Residues 762–770 (MEHHPMTEE) are Extracellular-facing. Residues 771–795 (FKNVLAVGNLIFTGIFAAEMVLKLI) traverse the membrane as a helical segment. Topologically, residues 796 to 804 (AMDPYEYFQ) are cytoplasmic. Residues 805 to 821 (VGWNIFDSLIVTLSLIE) form a helical membrane-spanning segment. The Extracellular segment spans residues 822 to 830 (LFLADVEGL). The helical transmembrane segment at 831–847 (SVLRSFRLLRVFKLAKS) threads the bilayer. The Cytoplasmic segment spans residues 848–864 (WPTLNMLIKIIGNSVGA). A helical transmembrane segment spans residues 865-887 (LGNLTLVLAIIVFIFAVVGMQLF). At 888-914 (GKSYKECVCKINVDCKLPRWHMNDFFH) the chain is on the extracellular side. A disulfide bond links C896 and C902. The pore-forming intramembrane region spans 915-927 (SFLIVFRVLCGEW). Over 928–939 (IETMWDCMEVAG) the chain is Extracellular. An intrachain disulfide couples C934 to C943. The chain crosses the membrane as a helical span at residues 940–966 (QTMCLIVYMMVMVIGNLVVLNLFLALL). The Cytoplasmic segment spans residues 967 to 1185 (LSSFSSDNLT…WWTIRKTCYR (219 aa)). Disordered stretches follow at residues 1015–1040 (KKPK…ISNR) and 1103–1145 (EELS…EPVN). A compositionally biased stretch (basic and acidic residues) spans 1019–1035 (GSKDTKRTADPNNKKEN). Over residues 1135–1145 (GEEEAEAEPVN) the composition is skewed to acidic residues. The III repeat unit spans residues 1178–1486 (TIRKTCYRIV…KKYYNAMKKL (309 aa)). The chain crosses the membrane as a helical span at residues 1186-1210 (IVEHSWFESFIVLMILLSSGALAFE). Over 1211–1222 (DIYIEKKKTIKI) the chain is Extracellular. The chain crosses the membrane as a helical span at residues 1223–1248 (ILEYADKIFTYIFILEMLLKWVAYGY). At 1249-1250 (KT) the chain is on the cytoplasmic side. The helical transmembrane segment at 1251-1276 (YFTNAWCWLDFLIVDVSLVTLVANTL) threads the bilayer. Over 1277 to 1285 (GYSDLGPIK) the chain is Extracellular. The chain crosses the membrane as a helical span at residues 1286 to 1302 (SLRTLRALRPLRALSRF). The Cytoplasmic portion of the chain corresponds to 1303–1315 (EGMRVVVNALIGA). A helical membrane pass occupies residues 1316 to 1340 (IPSIMNVLLVCLIFWLIFSIMGVNL). At 1341-1392 (FAGKFYECVNTTDGSRFPTSQVANRSECFALMNVSGNVRWKNLKVNFDNVGL) the chain is on the extracellular side. A disulfide bond links C1348 and C1368. N1350, N1364, and N1373 each carry an N-linked (GlcNAc...) asparagine glycan. Residues 1393 to 1403 (GYLSLLQVATF) constitute an intramembrane region (pore-forming). At 1404-1429 (KGWMDIMYAAVDSVNVNEQPKYEYSL) the chain is on the extracellular side. A helical membrane pass occupies residues 1430–1455 (YMYIYFVIFIIFGSFFTLNLFIGVII). Residues 1456-1512 (DNFNQQKKKLGGQDIFMTEEQKKYYNAMKKLGSKKPQKPIPRPGNKFQGCIFDLVTN) lie on the Cytoplasmic side of the membrane. A Phosphoserine; by PKC modification is found at S1488. One copy of the IV repeat lies at 1495-1793 (IPRPGNKFQG…WEKFDPDATQ (299 aa)). The chain crosses the membrane as a helical span at residues 1513-1532 (QAFDITIMVLICLNMVTMMV). Topologically, residues 1533 to 1543 (EKEGQTEYMDY) are extracellular. Residues 1544 to 1565 (VLHWINMVFIILFTGECVLKLI) form a helical membrane-spanning segment. Residues 1566–1574 (SLRHYYFTV) are Cytoplasmic-facing. The chain crosses the membrane as a helical span at residues 1575-1596 (GWNIFDFVVVILSIVGMFLAEM). Residues 1597-1605 (IEKYFVSPT) lie on the Extracellular side of the membrane. The helical transmembrane segment at 1606 to 1625 (LFRVIRLARIGRILRLIKGA) threads the bilayer. Residues 1626–1638 (KGIRTLLFALMMS) are Cytoplasmic-facing. A helical membrane pass occupies residues 1639-1661 (LPALFNIGLLLFLVMFIYAIFGM). At 1662–1684 (SNFAYVKKEAGINDMFNFETFGN) the chain is on the extracellular side. An intramembrane region (pore-forming) is located at residues 1685-1697 (SMICLFQITTSAG). The Extracellular segment spans residues 1698-1731 (WDGLLAPILNSAPPDCDPKKVHPGSSVEGDCGNP). A disulfide bond links C1713 and C1728. Residues 1732 to 1757 (SVGIFYFVSYIIISFLVVVNMYIAVI) traverse the membrane as a helical segment. Residues 1758-1984 (LENFSVATEE…EDKEKDESRK (227 aa)) are Cytoplasmic-facing. Positions 1887-1916 (EEVSATIIQRAYRRYRLRQHVKNISSIYIK) constitute an IQ domain. Basic and acidic residues predominate over residues 1916–1930 (KDGDRDDDLPNKEDT). The disordered stretch occupies residues 1916 to 1984 (KDGDRDDDLP…EDKEKDESRK (69 aa)). Positions 1946–1958 (VTASTISPPSYDS) are enriched in polar residues. Residues 1960–1984 (TKPDQEKYETDKTEKEDKEKDESRK) are compositionally biased toward basic and acidic residues.

Belongs to the sodium channel (TC 1.A.1.10) family. Nav1.7/SCN9A subfamily. As to quaternary structure, the Nav1.7 voltage-gated sodium channel consists of an ion-conducting alpha subunit SCN9A which is functional on its own regulated by one or more beta-1 (SCN1B), beta-2 (SCN2B), beta-3 (SCN3B) and beta-4 (SCN4B) subunits. SCN1B and SCN3B are non-covalently associated with SCN9A. SCN2B and SCN4B are disulfide-linked to SCN9A. SCN1B regulates channel inactivation. Interacts with NEDD4 and NEDD4L; regulates Nav1.7 activity most probably through ubiquitination and subsequent endocytosis. Interacts with TMEM233; modulates the gating properties of NaV1.7. Post-translationally, phosphorylation at Ser-1488 by PKC in a highly conserved cytoplasmic loop increases peak sodium currents. Ubiquitinated by NEDD4L; which may promote its endocytosis. Does not seem to be ubiquitinated by NEDD4. In terms of processing, ubiquitinated by NEDD4L; which may promote its endocytosis. As to expression, expressed at high level in the dorsal root ganglion and at much lower levels in the brain, sciatic nerve, nodose ganglia, heart, thyroid and adrenal glands and Schwann cells, but not in the cardiac and skeletal muscles, brain and liver.

It localises to the cell membrane. It is found in the cell projection. The protein localises to the neuron projection. Its subcellular location is the axon. It carries out the reaction Na(+)(in) = Na(+)(out). Its activity is regulated as follows. Inhibited by the conotoxin GVIIJ. In terms of biological role, pore-forming subunit of Nav1.7, a voltage-gated sodium (Nav) channel that directly mediates the depolarizing phase of action potentials in excitable membranes. Navs, also called VGSCs (voltage-gated sodium channels) or VDSCs (voltage-dependent sodium channels), operate by switching between closed and open conformations depending on the voltage difference across the membrane. In the open conformation they allow Na(+) ions to selectively pass through the pore, along their electrochemical gradient. The influx of Na(+) ions provokes membrane depolarization, initiating the propagation of electrical signals throughout cells and tissues. Nav1.7 plays a crucial role in controlling the excitability and action potential propagation from nociceptor neurons, thereby contributing to the sensory perception of pain. This Rattus norvegicus (Rat) protein is Sodium channel protein type 9 subunit alpha.